We begin with the raw amino-acid sequence, 364 residues long: Homeobox protein Nkx-6.1 (364 aa).

Positions 35 to 134 (LYPATYPPLP…SSSSSASATS (100 aa)) are disordered. 2 stretches are compositionally biased toward low complexity: residues 48 to 92 (PSSS…LSAA) and 109 to 134 (ASGA…SATS). Residues 101–268 (LSRPSMPVAS…KYLAGPERAR (168 aa)) are repressor domain. Asymmetric dimethylarginine is present on Arg189. The segment at residues 236 to 295 (RKHTRPTFSGQQIFALEKTFEQTKYLAGPERARLAYSLGMTESQVKVWFQNRRTKWRKKH) is a DNA-binding region (homeobox). A disordered region spans residues 294–364 (KHAAEMATAK…LHASEAEGSS (71 aa)). Basic and acidic residues predominate over residues 304–317 (KKQDSETERLKGTS). Residues 306–364 (QDSETERLKGTSENEEEDDDYNKPLDPNSDDEKITQLLKKHKSSSGGLLLHASEAEGSS) are involved in DNA-binding.

Pancreatic beta cells.

It is found in the nucleus. In terms of biological role, together with NKX2-2 and IRX3 acts to restrict the generation of motor neurons to the appropriate region of the neural tube. Belongs to the class II proteins of neuronal progenitor factors, which are induced by SHH signals. Transcription factor which binds to specific A/T-rich DNA sequences in the promoter regions of a number of genes. Involved in transcriptional regulation in islet beta cells. Binds to the insulin promoter and is involved in regulation of the insulin gene. The sequence is that of Homeobox protein Nkx-6.1 (NKX6-1) from Mesocricetus auratus (Golden hamster).